The sequence spans 167 residues: Photosystem I assembly protein Ycf3 (167 aa).

TPR repeat units follow at residues 35–68 (AFTYYRDGMSAQAEGEYAEALQNYYEAMRLEIDP), 72–105 (SYILYNIGLIHTSNGEHAKALEYYFQALERNPSL), and 120–153 (GEQAIQQQDIESSKAWFNQAAEYWKQAIQLAPGN).

It belongs to the Ycf3 family.

It localises to the plastid. It is found in the chloroplast thylakoid membrane. Essential for the assembly of the photosystem I (PSI) complex. May act as a chaperone-like factor to guide the assembly of the PSI subunits. This chain is Photosystem I assembly protein Ycf3, found in Chara vulgaris (Common stonewort).